Reading from the N-terminus, the 248-residue chain is Type III pantothenate kinase (248 aa).

6–13 (DIGNTETK) is a binding site for ATP. 103–106 (GSDR) contributes to the substrate binding site. Aspartate 105 serves as the catalytic Proton acceptor. Aspartate 124 serves as a coordination point for K(+). Residue threonine 127 coordinates ATP. A substrate-binding site is contributed by threonine 178.

This sequence belongs to the type III pantothenate kinase family. In terms of assembly, homodimer. It depends on NH4(+) as a cofactor. The cofactor is K(+).

The protein resides in the cytoplasm. The enzyme catalyses (R)-pantothenate + ATP = (R)-4'-phosphopantothenate + ADP + H(+). It participates in cofactor biosynthesis; coenzyme A biosynthesis; CoA from (R)-pantothenate: step 1/5. Its function is as follows. Catalyzes the phosphorylation of pantothenate (Pan), the first step in CoA biosynthesis. In Pelagibacter ubique (strain HTCC1062), this protein is Type III pantothenate kinase.